The sequence spans 79 residues: CDC42 small effector protein 1 (79 aa).

2 S-palmitoyl cysteine lipidation sites follow: C10 and C11. Residues 30–43 (IGEPMNFVHLTHIG) form the CRIB domain. A disordered region spans residues 48-79 (GAGDGLAMTGAVQEQMRSKGNRDRPWSNSRAL). Basic and acidic residues predominate over residues 63 to 72 (MRSKGNRDRP).

The protein belongs to the CDC42SE/SPEC family. As to quaternary structure, interacts with CDC42 (in GTP-bound form). Interacts weakly with RAC1 and not at all with RHOA.

It is found in the cytoplasm. The protein resides in the cytoskeleton. The protein localises to the cell membrane. Functionally, probably involved in the organization of the actin cytoskeleton by acting downstream of CDC42, inducing actin filament assembly. Alters CDC42-induced cell shape changes. In activated T-cells, may play a role in CDC42-mediated F-actin accumulation at the immunological synapse. May play a role in early contractile events in phagocytosis in macrophages. The sequence is that of CDC42 small effector protein 1 (Cdc42se1) from Rattus norvegicus (Rat).